The chain runs to 756 residues: MSTESKCPFNHAAGGGTTNRDWWPKQLNLKILHQHSSLSDPMGESFDYAKEFKSLDFEAVKQDLRDVMTRSQDWWPADFGHYGPLFVRMAWHSAGTYRTGDGHGGAGAGQQRFAPLNSWPDNVSLDKARRLIWPVKQKYGRKISWADLIVLTGNVALESMGFKTFGFSGGRPDVWEPEEDVYWGSETTWLGGEERYGAQKKMQQPGDGTLVAEPENHANEESRTASGERNLENPLAAVQMGLIYVNPEGPEGVPDPVASAKDIRETFGRMAMNDEETVALIAGGHAFGKTHGAGPADNVGPEPEAAGLEEQGLGWRNKFGSGKGGDTITSGLEVTWTSTPTKWSNEYLENLFGFEWELTKSPAGAHQWTPKNGAGAGKIPDAHDPSKRHAPSMLTSDLALRFDPAYEQISRRFLNNPEQLADAFARAWFKLTHRDMGPLARYLGPETPAEELLWQDPIPNVDHALVDDQDVAALKGKILASGLSVPQLVSTAWAAASTFRGSDKRGGANGGRLRLAPQKDWAVNQPAQLAGVLKTLEGIQSEFNAAQSSGKQVSIADLIVLAGSAGVEQAAKNAGHHVTVPFTPGRADASQEQTDVESFSFLEPIADGFRNYQKGHYKVSAESLLVDKAQLLTLTAPEMAVLLGGLRVLNINVGQSKHGVFTDKPETLSNDFFKNLLDMGVEWRATSGANDTFEARDRKTGAVKWTGTRVDLVFGSHAQLRAISEVYGSSDANEKFVKDFVAAWTKVMNLDRFDLA.

The tryptophyl-tyrosyl-methioninium (Trp-Tyr) (with M-270) cross-link spans 91–244 (WHSAGTYRTG…LAAVQMGLIY (154 aa)). H92 serves as the catalytic Proton acceptor. The segment at 198-230 (AQKKMQQPGDGTLVAEPENHANEESRTASGERN) is disordered. The segment covering 214 to 223 (PENHANEESR) has biased composition (basic and acidic residues). The segment at residues 244 to 270 (YVNPEGPEGVPDPVASAKDIRETFGRM) is a cross-link (tryptophyl-tyrosyl-methioninium (Tyr-Met) (with W-91)). H285 contacts heme b. The interval 371 to 390 (KNGAGAGKIPDAHDPSKRHA) is disordered.

The protein belongs to the peroxidase family. Peroxidase/catalase subfamily. Homodimer or homotetramer. The cofactor is heme b. Post-translationally, formation of the three residue Trp-Tyr-Met cross-link is important for the catalase, but not the peroxidase activity of the enzyme.

It catalyses the reaction H2O2 + AH2 = A + 2 H2O. The catalysed reaction is 2 H2O2 = O2 + 2 H2O. Bifunctional enzyme with both catalase and broad-spectrum peroxidase activity. The chain is Catalase-peroxidase from Pseudomonas savastanoi pv. phaseolicola (strain 1448A / Race 6) (Pseudomonas syringae pv. phaseolicola (strain 1448A / Race 6)).